The sequence spans 176 residues: MALLLLSLGLSLIAAQEFDPHTVMQRNYNVARVSGVWYSIFMASDDLNRIKENGDLRVFVRNIEHLKNGSLIFDFEYMVQGECVAVVVVCEKTEKNGEYSINYEGQNTVAVSETDYRLFITFHLQNFRNGTETHTLALYETCEKYGLGSQNIIDLTNKDPCYSKHYRSPPRPPMRW.

The N-terminal stretch at 1 to 15 (MALLLLSLGLSLIAA) is a signal peptide. N-linked (GlcNAc...) asparagine glycans are attached at residues asparagine 68 and asparagine 129. The cysteines at positions 83 and 161 are disulfide-linked.

The protein belongs to the calycin superfamily. Lipocalin family.

It localises to the secreted. The polypeptide is Epididymal-specific lipocalin-9 (Homo sapiens (Human)).